The following is a 141-amino-acid chain: Large ribosomal subunit protein uL11 (141 aa).

This sequence belongs to the universal ribosomal protein uL11 family. As to quaternary structure, part of the ribosomal stalk of the 50S ribosomal subunit. Interacts with L10 and the large rRNA to form the base of the stalk. L10 forms an elongated spine to which L12 dimers bind in a sequential fashion forming a multimeric L10(L12)X complex. One or more lysine residues are methylated.

In terms of biological role, forms part of the ribosomal stalk which helps the ribosome interact with GTP-bound translation factors. The polypeptide is Large ribosomal subunit protein uL11 (Streptococcus agalactiae serotype III (strain NEM316)).